Reading from the N-terminus, the 213-residue chain is Orotate phosphoribosyltransferase (213 aa).

Lys-26 contacts 5-phospho-alpha-D-ribose 1-diphosphate. 34–35 lines the orotate pocket; that stretch reads FF. 5-phospho-alpha-D-ribose 1-diphosphate-binding positions include 72-73, Arg-99, Lys-100, Lys-103, His-105, and 124-132; these read YK and DDVITAGTA. 2 residues coordinate orotate: Thr-128 and Arg-156.

Belongs to the purine/pyrimidine phosphoribosyltransferase family. PyrE subfamily. As to quaternary structure, homodimer. Requires Mg(2+) as cofactor.

It carries out the reaction orotidine 5'-phosphate + diphosphate = orotate + 5-phospho-alpha-D-ribose 1-diphosphate. The protein operates within pyrimidine metabolism; UMP biosynthesis via de novo pathway; UMP from orotate: step 1/2. Its function is as follows. Catalyzes the transfer of a ribosyl phosphate group from 5-phosphoribose 1-diphosphate to orotate, leading to the formation of orotidine monophosphate (OMP). The protein is Orotate phosphoribosyltransferase of Pseudomonas savastanoi pv. phaseolicola (strain 1448A / Race 6) (Pseudomonas syringae pv. phaseolicola (strain 1448A / Race 6)).